The primary structure comprises 274 residues: Rhamnulose-1-phosphate aldolase (274 aa).

Glutamate 117 is an active-site residue. 3 residues coordinate Zn(2+): histidine 141, histidine 143, and histidine 212.

Belongs to the aldolase class II family. RhaD subfamily. As to quaternary structure, homotetramer. The cofactor is Zn(2+).

Its subcellular location is the cytoplasm. It catalyses the reaction L-rhamnulose 1-phosphate = (S)-lactaldehyde + dihydroxyacetone phosphate. Its pathway is carbohydrate degradation; L-rhamnose degradation; glycerone phosphate from L-rhamnose: step 3/3. In terms of biological role, catalyzes the reversible cleavage of L-rhamnulose-1-phosphate to dihydroxyacetone phosphate (DHAP) and L-lactaldehyde. In Escherichia coli O6:H1 (strain CFT073 / ATCC 700928 / UPEC), this protein is Rhamnulose-1-phosphate aldolase.